Reading from the N-terminus, the 236-residue chain is Probable fimbrial chaperone EcpE (236 aa).

The first 27 residues, M1–A27, serve as a signal peptide directing secretion.

The protein belongs to the EcpB/EcpE family.

Functionally, part of the ecpRABCDE operon, which encodes the E.coli common pilus (ECP). ECP is found in both commensal and pathogenic strains and plays a dual role in early-stage biofilm development and host cell recognition. The chain is Probable fimbrial chaperone EcpE (ecpE) from Escherichia coli O18:K1:H7 (strain IHE3034 / ExPEC).